Reading from the N-terminus, the 217-residue chain is Large ribosomal subunit protein bL25 (217 aa).

Residues threonine 185–glutamate 217 form a disordered region. Acidic residues predominate over residues valine 189–glutamate 217.

This sequence belongs to the bacterial ribosomal protein bL25 family. CTC subfamily. Part of the 50S ribosomal subunit; part of the 5S rRNA/L5/L18/L25 subcomplex. Contacts the 5S rRNA. Binds to the 5S rRNA independently of L5 and L18.

In terms of biological role, this is one of the proteins that binds to the 5S RNA in the ribosome where it forms part of the central protuberance. The sequence is that of Large ribosomal subunit protein bL25 from Desulfosudis oleivorans (strain DSM 6200 / JCM 39069 / Hxd3) (Desulfococcus oleovorans).